The sequence spans 287 residues: Probable 3-hydroxybutyryl-CoA dehydrogenase (287 aa).

Belongs to the 3-hydroxyacyl-CoA dehydrogenase family.

It catalyses the reaction (3S)-3-hydroxybutanoyl-CoA + NADP(+) = acetoacetyl-CoA + NADPH + H(+). It participates in lipid metabolism; butanoate metabolism. This chain is Probable 3-hydroxybutyryl-CoA dehydrogenase (mmgB), found in Bacillus subtilis (strain 168).